The chain runs to 103 residues: Large ribosomal subunit protein bL21 (103 aa).

The protein belongs to the bacterial ribosomal protein bL21 family. In terms of assembly, part of the 50S ribosomal subunit. Contacts protein L20.

This protein binds to 23S rRNA in the presence of protein L20. This chain is Large ribosomal subunit protein bL21, found in Chromohalobacter salexigens (strain ATCC BAA-138 / DSM 3043 / CIP 106854 / NCIMB 13768 / 1H11).